Consider the following 552-residue polypeptide: MTKFVFVTGGVVSSLGKGIAAASLAAILESRGLKVTLLKLDPYINVDPGTMSPFQHGEVFVTEDGAETDLDLGHYERFITAKMRKVNNFTTGQIYESVIRKERRGEYLGKTVQVIPHITNEIQDYIYRGAEGFDVALVEIGGTVGDIESLPFLEAARQLSLRAGRNAAAFVHLTLVPYLVSAGELKTKPTQHSVQKLREIGISPDALLCRADRPIPDDERAKISLFSNVPEDAVISVWDADTIYKIPQMLYDQGLDRIVCEKLALSPKPADLSVWTKLVHALENPKHSVTIGMVGKYVDLTESYKSLTEALRHAGIHTESRVNIEYLDSEEIEASGPQCLAKYDAILVPGGFGKRGVEGKIAAARFAREHAIPYFGICLGMQVALIEYARNVAGLTKANSTEFDPDTEQPVVALINEWQNHDGKVERRDLNSDLGGTMRLGSQTCAVKPGTLAAEIYGNEVTERHRHRYEANNHYLGRVEEAGLIVSARTPAESLCEIMELPRTGEHAHPWYVGVQYHPEFNSTPRDGHPLFISFIKAALAHKQAEESKKVT.

The amidoligase domain stretch occupies residues 1 to 265 (MTKFVFVTGG…DRIVCEKLAL (265 aa)). Residue Ser-13 participates in CTP binding. Ser-13 contacts UTP. Residues 14–19 (SLGKGI) and Asp-71 each bind ATP. Positions 71 and 139 each coordinate Mg(2+). CTP is bound by residues 146–148 (DIE), 186–191 (KTKPTQ), and Lys-222. UTP contacts are provided by residues 186-191 (KTKPTQ) and Lys-222. The Glutamine amidotransferase type-1 domain occupies 290-545 (TIGMVGKYVD…IKAALAHKQA (256 aa)). Gly-351 contacts L-glutamine. Cys-378 acts as the Nucleophile; for glutamine hydrolysis in catalysis. L-glutamine-binding positions include 379–382 (LGMQ), Glu-402, and Arg-468. Residues His-518 and Glu-520 contribute to the active site.

It belongs to the CTP synthase family. As to quaternary structure, homotetramer.

The catalysed reaction is UTP + L-glutamine + ATP + H2O = CTP + L-glutamate + ADP + phosphate + 2 H(+). The enzyme catalyses L-glutamine + H2O = L-glutamate + NH4(+). It catalyses the reaction UTP + NH4(+) + ATP = CTP + ADP + phosphate + 2 H(+). It participates in pyrimidine metabolism; CTP biosynthesis via de novo pathway; CTP from UDP: step 2/2. Allosterically activated by GTP, when glutamine is the substrate; GTP has no effect on the reaction when ammonia is the substrate. The allosteric effector GTP functions by stabilizing the protein conformation that binds the tetrahedral intermediate(s) formed during glutamine hydrolysis. Inhibited by the product CTP, via allosteric rather than competitive inhibition. Functionally, catalyzes the ATP-dependent amination of UTP to CTP with either L-glutamine or ammonia as the source of nitrogen. Regulates intracellular CTP levels through interactions with the four ribonucleotide triphosphates. This Herminiimonas arsenicoxydans protein is CTP synthase.